Consider the following 202-residue polypeptide: Transcriptional regulator SdrP (202 aa).

Positions Q117–K189 constitute an HTH crp-type domain. Positions H149–G168 form a DNA-binding region, H-T-H motif.

As to quaternary structure, homodimer.

Functionally, activates transcription. The consensus DNA-binding site of this transcriptional regulator is 5'-WWGTGAN(5-7)ACACWW-3' in which W is A or T and N is G, A, T or C. Regulated genes include those encoding proteins involved in nutrient and energy supply, redox control and polyadenylation of mRNA. Also regulates genes involved in oxidative stress response such as genes encoding manganese superoxide dismutase and catalase, and genes encoding a protein involved in nucleotide excision repair of damaged DNA and putative proteins involved in redox control, protein degradation and transcriptional regulation. The sequence is that of Transcriptional regulator SdrP from Thermus thermophilus (strain ATCC 27634 / DSM 579 / HB8).